A 661-amino-acid polypeptide reads, in one-letter code: Hemocyanin C chain (661 aa).

A disulfide bond links cysteine 3 and cysteine 557. Cu cation is bound by residues histidine 200, histidine 204, histidine 230, histidine 350, histidine 354, and histidine 390. A glycan (N-linked (GlcNAc...) asparagine) is linked at asparagine 476.

This sequence belongs to the tyrosinase family. Hemocyanin subfamily. Hexamer of a number of different chains, of which A, B, and C have been identified. Hemolymph.

The protein localises to the secreted. It is found in the extracellular space. Functionally, hemocyanins are copper-containing oxygen carriers occurring freely dissolved in the hemolymph of many mollusks and arthropods. This Panulirus interruptus (California spiny lobster) protein is Hemocyanin C chain.